The primary structure comprises 247 residues: MSKLFWAMLSFITRLPVPRRWSQGLDFEHYSRGIITFPLIGLLLGAISGLVFMVLQAWCGVPLAALFSVLVLALMTGGFHLDGLADTCDGVFSARSRDRMLEIMRDSRLGTHGGLALIFVVLAKILVLSELALRGEPILALLAAACAVSRGTAALLMYRHRYAREEGLGNVFIGKIDGRQTCVTLGLAAIFAAVLLPGMHGVAAMVVTMVAIFILGQLLKRTLGGQTGDTLGAAIELGELVFLLALL.

5 helical membrane-spanning segments follow: residues 34–54, 59–79, 113–133, 138–158, and 194–214; these read IITFPLIGLLLGAISGLVFMV, CGVPLAALFSVLVLALMTGGF, GGLALIFVVLAKILVLSELAL, ILALLAAACAVSRGTAALLMY, and VLLPGMHGVAAMVVTMVAIFI.

Belongs to the CobS family. The cofactor is Mg(2+).

It localises to the cell inner membrane. It catalyses the reaction alpha-ribazole + adenosylcob(III)inamide-GDP = adenosylcob(III)alamin + GMP + H(+). It carries out the reaction alpha-ribazole 5'-phosphate + adenosylcob(III)inamide-GDP = adenosylcob(III)alamin 5'-phosphate + GMP + H(+). The protein operates within cofactor biosynthesis; adenosylcobalamin biosynthesis; adenosylcobalamin from cob(II)yrinate a,c-diamide: step 7/7. Its function is as follows. Joins adenosylcobinamide-GDP and alpha-ribazole to generate adenosylcobalamin (Ado-cobalamin). Also synthesizes adenosylcobalamin 5'-phosphate from adenosylcobinamide-GDP and alpha-ribazole 5'-phosphate. The chain is Adenosylcobinamide-GDP ribazoletransferase from Shigella boydii serotype 4 (strain Sb227).